Consider the following 267-residue polypeptide: tRNA-cytidine(32) 2-sulfurtransferase 1 (267 aa).

The short motif at 42–47 is the PP-loop motif element; it reads SGGKDS. [4Fe-4S] cluster-binding residues include Cys117, Cys120, and Cys208.

It belongs to the TtcA family. In terms of assembly, homodimer. Mg(2+) is required as a cofactor. It depends on [4Fe-4S] cluster as a cofactor.

The protein localises to the cytoplasm. It catalyses the reaction cytidine(32) in tRNA + S-sulfanyl-L-cysteinyl-[cysteine desulfurase] + AH2 + ATP = 2-thiocytidine(32) in tRNA + L-cysteinyl-[cysteine desulfurase] + A + AMP + diphosphate + H(+). It participates in tRNA modification. Catalyzes the ATP-dependent 2-thiolation of cytidine in position 32 of tRNA, to form 2-thiocytidine (s(2)C32). The sulfur atoms are provided by the cysteine/cysteine desulfurase (IscS) system. The sequence is that of tRNA-cytidine(32) 2-sulfurtransferase 1 from Francisella tularensis subsp. novicida (strain U112).